The chain runs to 398 residues: Phosphoglycerate kinase (398 aa).

Substrate is bound by residues 21-23 (DFN), Arg-36, 59-62 (HLGR), Arg-119, and Arg-157. ATP is bound by residues Lys-208, Gly-296, Glu-327, and 354–357 (GGDS).

Belongs to the phosphoglycerate kinase family. In terms of assembly, monomer.

It is found in the cytoplasm. It catalyses the reaction (2R)-3-phosphoglycerate + ATP = (2R)-3-phospho-glyceroyl phosphate + ADP. The protein operates within carbohydrate degradation; glycolysis; pyruvate from D-glyceraldehyde 3-phosphate: step 2/5. In Streptococcus agalactiae serotype Ia (strain ATCC 27591 / A909 / CDC SS700), this protein is Phosphoglycerate kinase.